The chain runs to 820 residues: DNA mismatch repair protein MutS (820 aa).

618–625 (GPNMAGKS) provides a ligand contact to ATP.

It belongs to the DNA mismatch repair MutS family.

Its function is as follows. This protein is involved in the repair of mismatches in DNA. It is possible that it carries out the mismatch recognition step. This protein has a weak ATPase activity. The polypeptide is DNA mismatch repair protein MutS (Chlamydia trachomatis serovar L2b (strain UCH-1/proctitis)).